Here is a 224-residue protein sequence, read N- to C-terminus: UPF0758 protein Maqu_3564 (224 aa).

The MPN domain occupies 102-224 (PLRSPADTRR…VISLAERGLM (123 aa)). 3 residues coordinate Zn(2+): His173, His175, and Asp186. Positions 173–186 (HNHPSGVAEPSQAD) match the JAMM motif motif.

The protein belongs to the UPF0758 family.

The protein is UPF0758 protein Maqu_3564 of Marinobacter nauticus (strain ATCC 700491 / DSM 11845 / VT8) (Marinobacter aquaeolei).